Consider the following 379-residue polypeptide: MGERITLSVIKADIGGFVGHSSVHPRLLETAERYLAESKLLIDYRVAHVGDDIDLIMTHKYGVDCPEIHHLAWNVFLQCTEVARELKLYGAGQDLLSDAFSGNVKGMGPGVAEMEFEERKSEPIIVFAADKTEPGAWNLPLYKMFADPFNTIGLVIDPKMHQGFRFEVYDLIKNERVEFSLPEELYDLLVFIGAPGRYCIKSVYSKTTGEIAAVSSTQRLNLMAGRYVGKDDPVCIVRCQSGLPAVGEALEPFANPHLVAGWMRGSHIGPLMPVGLDQSAPTRFDGPPRVVAMGFQLSGGRLVGPQDFFGDVAFDKARQTANEIASYLRSLGPFEPHRLPLEDMEYTTMPEVMAKLKNRFVKVDHRDDREPAAEELGAK.

Residue Asp13 is the Proton acceptor; for FBP phosphatase activity of the active site. Residues Asp13, His20, Asp51, and Asp52 each coordinate Mg(2+). His20 lines the beta-D-fructose 1,6-bisphosphate pocket. His20 provides a ligand contact to dihydroxyacetone phosphate. A beta-D-fructose 1,6-bisphosphate-binding site is contributed by Tyr89. Gln93 is a Mg(2+) binding site. 102-103 is a beta-D-fructose 1,6-bisphosphate binding site; that stretch reads GN. Asp130 is a Mg(2+) binding site. Beta-D-fructose 1,6-bisphosphate is bound at residue Lys131. Residue Lys131 coordinates dihydroxyacetone phosphate. The active-site Proton donor/acceptor; for FBP aldolase activity is the Tyr227. Positions 230, 231, and 232 each coordinate Mg(2+). Lys230 (schiff-base intermediate with DHAP; for FBP aldolase activity) is an active-site residue. Beta-D-fructose 1,6-bisphosphate is bound by residues 240 to 241, Arg264, Asp285, and Tyr346; that span reads QS. Dihydroxyacetone phosphate-binding residues include Arg264 and Asp285.

The protein belongs to the FBP aldolase/phosphatase family. In terms of assembly, homooctamer; dimer of tetramers. It depends on Mg(2+) as a cofactor.

It catalyses the reaction beta-D-fructose 1,6-bisphosphate + H2O = beta-D-fructose 6-phosphate + phosphate. The enzyme catalyses beta-D-fructose 1,6-bisphosphate = D-glyceraldehyde 3-phosphate + dihydroxyacetone phosphate. It participates in carbohydrate biosynthesis; gluconeogenesis. In terms of biological role, catalyzes two subsequent steps in gluconeogenesis: the aldol condensation of dihydroxyacetone phosphate (DHAP) and glyceraldehyde-3-phosphate (GA3P) to fructose-1,6-bisphosphate (FBP), and the dephosphorylation of FBP to fructose-6-phosphate (F6P). The sequence is that of Fructose-1,6-bisphosphate aldolase/phosphatase from Moorella thermoacetica (strain ATCC 39073 / JCM 9320).